A 177-amino-acid chain; its full sequence is Large ribosomal subunit protein uL6 (177 aa).

It belongs to the universal ribosomal protein uL6 family. In terms of assembly, part of the 50S ribosomal subunit.

This protein binds to the 23S rRNA, and is important in its secondary structure. It is located near the subunit interface in the base of the L7/L12 stalk, and near the tRNA binding site of the peptidyltransferase center. The sequence is that of Large ribosomal subunit protein uL6 from Erythrobacter litoralis (strain HTCC2594).